Reading from the N-terminus, the 308-residue chain is 1D-myo-inositol 2-acetamido-2-deoxy-alpha-D-glucopyranoside deacetylase (308 aa).

His-37, Asp-40, and His-171 together coordinate Zn(2+).

It belongs to the MshB deacetylase family. Zn(2+) serves as cofactor.

It carries out the reaction 1D-myo-inositol 2-acetamido-2-deoxy-alpha-D-glucopyranoside + H2O = 1D-myo-inositol 2-amino-2-deoxy-alpha-D-glucopyranoside + acetate. Catalyzes the deacetylation of 1D-myo-inositol 2-acetamido-2-deoxy-alpha-D-glucopyranoside (GlcNAc-Ins) in the mycothiol biosynthesis pathway. The chain is 1D-myo-inositol 2-acetamido-2-deoxy-alpha-D-glucopyranoside deacetylase from Mycobacterium sp. (strain JLS).